The following is a 147-amino-acid chain: Large ribosomal subunit protein uL15 (147 aa).

Residues 1 to 65 (MQLHELKPAP…PLQRRLPKRG (65 aa)) are disordered. Gly residues-rich tracts occupy residues 21–31 (QGIGSGLGKTA) and 42–52 (SGGGVRPGFEG).

It belongs to the universal ribosomal protein uL15 family. As to quaternary structure, part of the 50S ribosomal subunit.

Binds to the 23S rRNA. In Heliobacterium modesticaldum (strain ATCC 51547 / Ice1), this protein is Large ribosomal subunit protein uL15.